Reading from the N-terminus, the 296-residue chain is Acetylglutamate kinase (296 aa).

Substrate contacts are provided by residues 67-68 (GG), arginine 89, and asparagine 194.

This sequence belongs to the acetylglutamate kinase family. ArgB subfamily.

It localises to the cytoplasm. The enzyme catalyses N-acetyl-L-glutamate + ATP = N-acetyl-L-glutamyl 5-phosphate + ADP. It participates in amino-acid biosynthesis; L-arginine biosynthesis; N(2)-acetyl-L-ornithine from L-glutamate: step 2/4. In terms of biological role, catalyzes the ATP-dependent phosphorylation of N-acetyl-L-glutamate. In Brucella abortus (strain S19), this protein is Acetylglutamate kinase.